Here is a 129-residue protein sequence, read N- to C-terminus: Histone H2B.2 (129 aa).

Basic and acidic residues predominate over residues 1-19 (MAPKAEKKPASKAPAEKKP). Residues 1 to 38 (MAPKAEKKPASKAPAEKKPAAKKTATSGTKKRSKTRKE) are disordered. 2 positions are modified to N6-acetyllysine; alternate: Lys-7 and Lys-8. Glycyl lysine isopeptide (Lys-Gly) (interchain with G-Cter in SUMO); alternate cross-links involve residues Lys-7 and Lys-8. Residue Ser-11 is modified to Phosphoserine. Lys-12 carries the post-translational modification N6-acetyllysine. Lys-17 bears the N6-acetyllysine; alternate mark. Lys-17 is covalently cross-linked (Glycyl lysine isopeptide (Lys-Gly) (interchain with G-Cter in SUMO); alternate). A Glycyl lysine isopeptide (Lys-Gly) (interchain with G-Cter in SUMO) cross-link involves residue Lys-18. Lys-123 participates in a covalent cross-link: Glycyl lysine isopeptide (Lys-Gly) (interchain with G-Cter in ubiquitin).

Belongs to the histone H2B family. In terms of assembly, the nucleosome is a histone octamer containing two molecules each of H2A, H2B, H3 and H4 assembled in one H3-H4 heterotetramer and two H2A-H2B heterodimers. The octamer wraps approximately 147 bp of DNA. In terms of processing, monoubiquitinated by the UBC2-BRE1 complex to form H2BK123ub1. H2BK123ub1 gives a specific tag for epigenetic transcriptional activation and is also prerequisite for H3K4me and H3K79me formation. H2BK123ub1 also modulates the formation of double-strand breaks during meiosis and is a prerequisite for DNA-damage checkpoint activation. Post-translationally, phosphorylated by STE20 to form H2BS10ph during progression through meiotic prophase. May be correlated with chromosome condensation. Acetylated by GCN5 to form H2BK11ac and H2BK16ac. H2BK16ac can also be formed by ESA1. Acetylation of N-terminal lysines and particularly formation of H2BK11acK16ac has a positive effect on transcription. In terms of processing, sumoylation to form H2BK6su or H2BK7su, and probably also H2BK16su or H2BK17su, occurs preferentially near the telomeres and represses gene transcription.

It is found in the nucleus. It localises to the chromosome. Its function is as follows. Core component of nucleosome. Nucleosomes wrap and compact DNA into chromatin, limiting DNA accessibility to the cellular machineries which require DNA as a template. Histones thereby play a central role in transcription regulation, DNA repair, DNA replication and chromosomal stability. DNA accessibility is regulated via a complex set of post-translational modifications of histones, also called histone code, and nucleosome remodeling. The protein is Histone H2B.2 (HTB2) of Debaryomyces hansenii (strain ATCC 36239 / CBS 767 / BCRC 21394 / JCM 1990 / NBRC 0083 / IGC 2968) (Yeast).